An 889-amino-acid polypeptide reads, in one-letter code: Phosphofurin acidic cluster sorting protein 2 (889 aa).

Disordered regions lie at residues 180–246, 293–463, and 687–740; these read DHED…TSMT, LDME…PDAR, and SSAT…SQGV. The segment covering 343-358 has biased composition (basic and acidic residues); it reads SHKEPPSPADVPEKTR. Phosphoserine is present on residues serine 390, serine 416, serine 453, serine 691, and serine 694. Composition is skewed to low complexity over residues 687 to 720 and 727 to 737; these read SSATSGDSDDAAPSGSGTLSSTPPSASPAAKEAS and PSVSGGLSSPS.

It belongs to the PACS family. Interacts with BID and PKD2. Interacts with SIRT1. Interacts with HDAC1. Interacts with TRPV1. Interacts with WDR37. In terms of assembly, (Microbial infection) Interacts with HIV-1 Nef. As to expression, broadly expressed, with greatest levels in skeletal muscle followed by heart, brain, pancreas and testis.

The protein localises to the endoplasmic reticulum. It is found in the mitochondrion. Its function is as follows. Multifunctional sorting protein that controls the endoplasmic reticulum (ER)-mitochondria communication, including the apposition of mitochondria with the ER and ER homeostasis. In addition, in response to apoptotic inducer, translocates BIB to mitochondria, which initiates a sequence of events including the formation of mitochondrial truncated BID, the release of cytochrome c, the activation of caspase-3 thereby causing cell death. May also be involved in ion channel trafficking, directing acidic cluster-containing ion channels to distinct subcellular compartments. This Homo sapiens (Human) protein is Phosphofurin acidic cluster sorting protein 2.